A 440-amino-acid polypeptide reads, in one-letter code: Eukaryotic translation initiation factor 3 subunit E (440 aa).

The 174-residue stretch at 219–392 folds into the PCI domain; sequence VYFNYPKGRD…GQVVMGAKTT (174 aa).

This sequence belongs to the eIF-3 subunit E family. In terms of assembly, component of the eukaryotic translation initiation factor 3 (eIF-3) complex.

It localises to the cytoplasm. Functionally, component of the eukaryotic translation initiation factor 3 (eIF-3) complex, which is involved in protein synthesis of a specialized repertoire of mRNAs and, together with other initiation factors, stimulates binding of mRNA and methionyl-tRNAi to the 40S ribosome. The eIF-3 complex specifically targets and initiates translation of a subset of mRNAs involved in cell proliferation. The polypeptide is Eukaryotic translation initiation factor 3 subunit E (Brugia malayi (Filarial nematode worm)).